A 440-amino-acid polypeptide reads, in one-letter code: Methionine aminopeptidase 2-2 (440 aa).

Positions 1–102 are disordered; sequence MAAQVPTEAL…KGQEEEYRDE (102 aa). Over residues 36–46 the composition is skewed to acidic residues; that stretch reads DSDDSDEEGEE. Over residues 56–70 the composition is skewed to basic residues; it reads AKKKKKNKKKKKKKS. A substrate-binding site is contributed by histidine 194. Aspartate 214, aspartate 225, and histidine 294 together coordinate a divalent metal cation. Substrate is bound at residue histidine 302. A divalent metal cation is bound by residues glutamate 327 and glutamate 421.

Belongs to the peptidase M24A family. Methionine aminopeptidase eukaryotic type 2 subfamily. The cofactor is Co(2+). It depends on Zn(2+) as a cofactor. Mn(2+) is required as a cofactor. Fe(2+) serves as cofactor.

It is found in the cytoplasm. It catalyses the reaction Release of N-terminal amino acids, preferentially methionine, from peptides and arylamides.. In terms of biological role, cotranslationally removes the N-terminal methionine from nascent proteins. The N-terminal methionine is often cleaved when the second residue in the primary sequence is small and uncharged (Met-Ala-, Cys, Gly, Pro, Ser, Thr, or Val). The protein is Methionine aminopeptidase 2-2 of Colletotrichum graminicola (strain M1.001 / M2 / FGSC 10212) (Maize anthracnose fungus).